A 416-amino-acid chain; its full sequence is Serine hydroxymethyltransferase (416 aa).

Residues leucine 118 and 122–124 each bind (6S)-5,6,7,8-tetrahydrofolate; that span reads GHL. An N6-(pyridoxal phosphate)lysine modification is found at lysine 227. (6S)-5,6,7,8-tetrahydrofolate contacts are provided by residues glutamate 242 and 350–352; that span reads SPF.

Belongs to the SHMT family. Homodimer. Pyridoxal 5'-phosphate is required as a cofactor.

It localises to the cytoplasm. It carries out the reaction (6R)-5,10-methylene-5,6,7,8-tetrahydrofolate + glycine + H2O = (6S)-5,6,7,8-tetrahydrofolate + L-serine. Its pathway is one-carbon metabolism; tetrahydrofolate interconversion. It participates in amino-acid biosynthesis; glycine biosynthesis; glycine from L-serine: step 1/1. Catalyzes the reversible interconversion of serine and glycine with tetrahydrofolate (THF) serving as the one-carbon carrier. This reaction serves as the major source of one-carbon groups required for the biosynthesis of purines, thymidylate, methionine, and other important biomolecules. Also exhibits THF-independent aldolase activity toward beta-hydroxyamino acids, producing glycine and aldehydes, via a retro-aldol mechanism. The chain is Serine hydroxymethyltransferase from Syntrophotalea carbinolica (strain DSM 2380 / NBRC 103641 / GraBd1) (Pelobacter carbinolicus).